Consider the following 308-residue polypeptide: Heme A synthase (308 aa).

Residues 1-8 lie on the Cytoplasmic side of the membrane; it reads MFKKRNLK. Residues 9–29 form a helical membrane-spanning segment; it reads WLSILATVIMAWVQLGGALVT. The Extracellular portion of the chain corresponds to 30–67; sequence KTGSENGCGASWPLCHGALLPQNLPIATIIELSHRATS. A disulfide bridge connects residues Cys-37 and Cys-44. Residue Glu-60 is part of the active site. Residue His-63 coordinates heme o. The chain crosses the membrane as a helical span at residues 68 to 88; sequence ALSLIVVLWLVITAWKNIGYI. Residues 89-93 lie on the Cytoplasmic side of the membrane; it reads KEVKP. Residues 94–114 form a helical membrane-spanning segment; the sequence is LCIISVAFLLIQALVGAAAVL. The Extracellular portion of the chain corresponds to 115–123; it reads WQQNDYVLA. A helical transmembrane segment spans residues 124–144; it reads LHFGISLISFSSVFVLTLIIF. A heme o-binding site is contributed by His-125. Over 145–161 the chain is Cytoplasmic; sequence DVDQKYEANKVHIDRKL. Residues 162 to 182 form a helical membrane-spanning segment; the sequence is RIYTWTMAICLYVGIYTGALV. At 183–215 the chain is on the extracellular side; sequence RHTKSSLAYGSWPLPFNDLIPHTEQDWVQLAHR. Heme b is bound at residue His-214. A helical transmembrane segment spans residues 216–236; that stretch reads TLALIASISVFLAFNYAIKHY. The Cytoplasmic portion of the chain corresponds to 237–244; sequence QNNRTIRY. A helical transmembrane segment spans residues 245-265; that stretch reads GYTAALLLIILQIVTGALSIF. Topologically, residues 266–270 are extracellular; that stretch reads THVNL. The chain crosses the membrane as a helical span at residues 271–291; that stretch reads IIALLHALIITFEFGLIAYLI. His-276 serves as a coordination point for heme b. The Cytoplasmic portion of the chain corresponds to 292-308; the sequence is VLLLRSQRVEKVKQNAY.

Belongs to the COX15/CtaA family. Type 1 subfamily. Interacts with CtaB. Heme b serves as cofactor.

The protein resides in the cell membrane. It carries out the reaction Fe(II)-heme o + 2 A + H2O = Fe(II)-heme a + 2 AH2. Its pathway is porphyrin-containing compound metabolism; heme A biosynthesis; heme A from heme O: step 1/1. Its function is as follows. Catalyzes the conversion of heme O to heme A by two successive hydroxylations of the methyl group at C8. The first hydroxylation forms heme I, the second hydroxylation results in an unstable dihydroxymethyl group, which spontaneously dehydrates, resulting in the formyl group of heme A. The sequence is that of Heme A synthase from Staphylococcus carnosus (strain TM300).